Here is a 309-residue protein sequence, read N- to C-terminus: Porphobilinogen deaminase (309 aa).

The residue at position 242 (Cys242) is an S-(dipyrrolylmethanemethyl)cysteine.

This sequence belongs to the HMBS family. In terms of assembly, monomer. Requires dipyrromethane as cofactor.

It carries out the reaction 4 porphobilinogen + H2O = hydroxymethylbilane + 4 NH4(+). It participates in porphyrin-containing compound metabolism; protoporphyrin-IX biosynthesis; coproporphyrinogen-III from 5-aminolevulinate: step 2/4. Functionally, tetrapolymerization of the monopyrrole PBG into the hydroxymethylbilane pre-uroporphyrinogen in several discrete steps. The protein is Porphobilinogen deaminase of Legionella pneumophila (strain Paris).